Reading from the N-terminus, the 281-residue chain is ATP phosphoribosyltransferase (281 aa).

It belongs to the ATP phosphoribosyltransferase family. Long subfamily. Mg(2+) serves as cofactor.

The protein localises to the cytoplasm. The catalysed reaction is 1-(5-phospho-beta-D-ribosyl)-ATP + diphosphate = 5-phospho-alpha-D-ribose 1-diphosphate + ATP. The protein operates within amino-acid biosynthesis; L-histidine biosynthesis; L-histidine from 5-phospho-alpha-D-ribose 1-diphosphate: step 1/9. Its activity is regulated as follows. Feedback inhibited by histidine. In terms of biological role, catalyzes the condensation of ATP and 5-phosphoribose 1-diphosphate to form N'-(5'-phosphoribosyl)-ATP (PR-ATP). Has a crucial role in the pathway because the rate of histidine biosynthesis seems to be controlled primarily by regulation of HisG enzymatic activity. The sequence is that of ATP phosphoribosyltransferase from Natronomonas pharaonis (strain ATCC 35678 / DSM 2160 / CIP 103997 / JCM 8858 / NBRC 14720 / NCIMB 2260 / Gabara) (Halobacterium pharaonis).